The sequence spans 1184 residues: DNA-directed RNA polymerase subunit beta (1184 aa).

The interval 1160–1184 (DDDFTNQNDAFNIVQPENAAAEKTE) is disordered.

Belongs to the RNA polymerase beta chain family. As to quaternary structure, the RNAP catalytic core consists of 2 alpha, 1 beta, 1 beta' and 1 omega subunit. When a sigma factor is associated with the core the holoenzyme is formed, which can initiate transcription.

The catalysed reaction is RNA(n) + a ribonucleoside 5'-triphosphate = RNA(n+1) + diphosphate. DNA-dependent RNA polymerase catalyzes the transcription of DNA into RNA using the four ribonucleoside triphosphates as substrates. The sequence is that of DNA-directed RNA polymerase subunit beta from Listeria monocytogenes serotype 4b (strain F2365).